The chain runs to 502 residues: uncharacterized protein (502 aa).

This is an uncharacterized protein from Agrobacterium vitis (Rhizobium vitis).